A 176-amino-acid polypeptide reads, in one-letter code: Peptide deformylase (176 aa).

Positions 94 and 136 each coordinate Fe cation. Glu137 is a catalytic residue. His140 is a binding site for Fe cation.

The protein belongs to the polypeptide deformylase family. Fe(2+) serves as cofactor.

It catalyses the reaction N-terminal N-formyl-L-methionyl-[peptide] + H2O = N-terminal L-methionyl-[peptide] + formate. In terms of biological role, removes the formyl group from the N-terminal Met of newly synthesized proteins. Requires at least a dipeptide for an efficient rate of reaction. N-terminal L-methionine is a prerequisite for activity but the enzyme has broad specificity at other positions. This chain is Peptide deformylase, found in Bartonella quintana (strain Toulouse) (Rochalimaea quintana).